The following is a 728-amino-acid chain: Prolyl 3-hydroxylase 1 (728 aa).

A signal peptide spans 1-14; it reads MVAVAAAAASRATA. TPR repeat units follow at residues 25-58, 135-168, 197-230, and 293-326; these read PDLL…RAAL, RSPY…NPEH, HMHE…YFVA, and PSHY…FPND. N-linked (GlcNAc...) asparagine glycosylation is present at asparagine 308. Positions 393–431 form a coiled coil; sequence KRLQEKQKSERETAVRISQEIGNLMKEIETLVEEKTKES. N-linked (GlcNAc...) asparagine glycosylation is found at asparagine 450, asparagine 459, and asparagine 532. The Fe2OG dioxygenase domain occupies 556 to 670; it reads SHLVCRTAIE…RCAIALWFTL (115 aa). Fe cation is bound by residues histidine 579, aspartate 581, and histidine 651. Arginine 661 is an active-site residue. Positions 691–728 are disordered; sequence SPEEVDLPQEQPLPDQQGSPKPGEESLSDRESQPKDEL. The segment covering 698 to 707 has biased composition (low complexity); the sequence is PQEQPLPDQQ. The span at 712 to 728 shows a compositional bias: basic and acidic residues; the sequence is PGEESLSDRESQPKDEL. The short motif at 725–728 is the Prevents secretion from ER element; it reads KDEL.

The protein belongs to the leprecan family. It depends on Fe cation as a cofactor. L-ascorbate serves as cofactor. O-glycosylated; chondroitin sulfate. As to expression, expressed in basement membranes of cardiac muscle, skeletal muscle, central nervous system, intestinal tract, trachea, ear, skin, liver and kidney. In kidney, localizes to the glomerular basement membrane, mesangial matrix and Bowman's capsule of the nephron. In the renal parenchyma, expressed in the basement membranes of tubules and blood vessels. In the ear and trachea, localizes to the perimeter of resident chondrocytes in lacunae.

It is found in the endoplasmic reticulum. Its subcellular location is the secreted. The protein resides in the extracellular space. The protein localises to the extracellular matrix. It catalyses the reaction L-prolyl-[collagen] + 2-oxoglutarate + O2 = trans-3-hydroxy-L-prolyl-[collagen] + succinate + CO2. Its function is as follows. Basement membrane-associated chondroitin sulfate proteoglycan (CSPG). Has prolyl 3-hydroxylase activity catalyzing the post-translational formation of 3-hydroxyproline in -Xaa-Pro-Gly- sequences in collagens, especially types IV and V. May be involved in the secretory pathway of cells. Has growth suppressive activity in fibroblasts. This is Prolyl 3-hydroxylase 1 from Rattus norvegicus (Rat).